A 310-amino-acid chain; its full sequence is MEEQLRVGGCSPDGGFTIVNEAPVADLLEFLHIDVELEHARDDREESARSKNVMRKQRNWERRLEVKKSKRKEEKLRKKLNRQDKDVSDAQLSKRVIKAITKERLEGARAAGLRLCVDLSMTEHLTHKEISRLAAQIRRLYGSNKKALQPFHVFLTELQEDSLLYKECVGMNDGFMHYLIDVTEESWFHLFPSEDVIYLTPDASEALESVEEDKIYILGGLVDETIHKKISYTKAKELGVRTARLPIDEYMVKKENPKNFHSKILAINQVFDILLTFRDTRDWTKALMAGIPPGKGFVLASAASKPLEET.

Positions 55-94 form a coiled coil; it reads RKQRNWERRLEVKKSKRKEEKLRKKLNRQDKDVSDAQLSK. In terms of domain architecture, SAM-dependent MTase TRM10-type spans 101 to 298; the sequence is TKERLEGARA…AGIPPGKGFV (198 aa).

The protein belongs to the class IV-like SAM-binding methyltransferase superfamily. TRM10 family.

It carries out the reaction guanosine(9) in tRNA + S-adenosyl-L-methionine = N(1)-methylguanosine(9) in tRNA + S-adenosyl-L-homocysteine + H(+). S-adenosyl-L-methionine-dependent guanine N(1)-methyltransferase that catalyzes the formation of N(1)-methylguanine at position 9 (m1G9) in tRNAs. Probably not able to catalyze formation of N(1)-methyladenine at position 9 (m1A9) in tRNAs. The protein is tRNA methyltransferase 10 homolog B (trmt10b) of Danio rerio (Zebrafish).